We begin with the raw amino-acid sequence, 641 residues long: UPF0329 protein ECU11_0030 (641 aa).

The segment covering 358 to 387 has biased composition (basic and acidic residues); sequence RQRKREEETERSVKELVGDEEKAKSKEEKA. The disordered stretch occupies residues 358–444; it reads RQRKREEETE…KGGKKKSKGG (87 aa). Positions 435–444 are enriched in basic residues; that stretch reads KGGKKKSKGG.

The protein belongs to the UPF0329 family.

The polypeptide is UPF0329 protein ECU11_0030 (Encephalitozoon cuniculi (strain GB-M1) (Microsporidian parasite)).